A 180-amino-acid chain; its full sequence is Probable chorismate pyruvate-lyase (180 aa).

Positions 82, 120, and 165 each coordinate substrate.

This sequence belongs to the UbiC family.

It is found in the cytoplasm. It catalyses the reaction chorismate = 4-hydroxybenzoate + pyruvate. The protein operates within cofactor biosynthesis; ubiquinone biosynthesis. Removes the pyruvyl group from chorismate, with concomitant aromatization of the ring, to provide 4-hydroxybenzoate (4HB) for the ubiquinone pathway. In Aliivibrio fischeri (strain ATCC 700601 / ES114) (Vibrio fischeri), this protein is Probable chorismate pyruvate-lyase.